Here is a 435-residue protein sequence, read N- to C-terminus: uncharacterized protein (435 aa).

S-adenosyl-L-methionine contacts are provided by Q261, Y294, E318, and D366. The active-site Nucleophile is the C393.

This sequence belongs to the class I-like SAM-binding methyltransferase superfamily. RNA M5U methyltransferase family.

This is an uncharacterized protein from Bifidobacterium longum (strain NCC 2705).